Here is a 338-residue protein sequence, read N- to C-terminus: Galactinol synthase 2 (338 aa).

Lys105 is an active-site residue. Residues Asp121, Asp123, and His258 each contribute to the Mn(2+) site.

It belongs to the glycosyltransferase 8 family. Galactosyltransferase subfamily. It depends on a divalent metal cation as a cofactor.

Its subcellular location is the cytoplasm. The catalysed reaction is myo-inositol + UDP-alpha-D-galactose = alpha-D-galactosyl-(1-&gt;3)-1D-myo-inositol + UDP + H(+). Galactinol synthase involved in the biosynthesis of raffinose family oligosaccharides (RFOs) that function as osmoprotectants. May promote plant stress tolerance. The polypeptide is Galactinol synthase 2 (GOLS2) (Solanum lycopersicum (Tomato)).